The chain runs to 433 residues: Enolase (433 aa).

Gln-163 contributes to the (2R)-2-phosphoglycerate binding site. Glu-205 serves as the catalytic Proton donor. 3 residues coordinate Mg(2+): Asp-242, Glu-285, and Asp-312. (2R)-2-phosphoglycerate-binding residues include Lys-337, Arg-366, Ser-367, and Lys-388. The active-site Proton acceptor is Lys-337.

Belongs to the enolase family. Mg(2+) is required as a cofactor.

The protein resides in the cytoplasm. It is found in the secreted. Its subcellular location is the cell surface. It catalyses the reaction (2R)-2-phosphoglycerate = phosphoenolpyruvate + H2O. It participates in carbohydrate degradation; glycolysis; pyruvate from D-glyceraldehyde 3-phosphate: step 4/5. Functionally, catalyzes the reversible conversion of 2-phosphoglycerate (2-PG) into phosphoenolpyruvate (PEP). It is essential for the degradation of carbohydrates via glycolysis. This chain is Enolase, found in Lawsonia intracellularis (strain PHE/MN1-00).